Consider the following 1385-residue polypeptide: Formin-like protein 7 (1385 aa).

The 185-residue stretch at Phe-9–Pro-193 folds into the Phosphatase tensin-type domain. The active-site Phosphocysteine intermediate is Cys-126. Positions Asp-199–Ile-358 constitute a C2 tensin-type domain. 4 disordered regions span residues Ile-345 to Glu-367, Ala-427 to Asn-510, Ser-649 to Trp-989, and Lys-1362 to Pro-1385. Composition is skewed to polar residues over residues Lys-349 to Ile-358, Thr-448 to Gln-470, and Pro-483 to Asn-510. Pro residues-rich tracts occupy residues Pro-654 to Lys-665 and Thr-689 to Gln-701. A compositionally biased stretch (low complexity) spans Pro-702–Ser-718. Composition is skewed to pro residues over residues Pro-727–Ala-758, Pro-766–Ala-795, and Ala-802–Val-815. Over residues Gln-855–Arg-867 the composition is skewed to low complexity. 2 stretches are compositionally biased toward pro residues: residues Ser-895–Lys-906 and Trp-921–Lys-932. The segment covering Asn-933–Gly-942 has biased composition (low complexity). In terms of domain architecture, FH2 spans Arg-974–Lys-1372.

It belongs to the formin-like family. Class-II subfamily.

The protein is Formin-like protein 7 (FH7) of Oryza sativa subsp. japonica (Rice).